The chain runs to 355 residues: Elongation factor Ts (355 aa).

The involved in Mg(2+) ion dislocation from EF-Tu stretch occupies residues 82-85 (TDFV).

The protein belongs to the EF-Ts family.

It is found in the cytoplasm. In terms of biological role, associates with the EF-Tu.GDP complex and induces the exchange of GDP to GTP. It remains bound to the aminoacyl-tRNA.EF-Tu.GTP complex up to the GTP hydrolysis stage on the ribosome. This chain is Elongation factor Ts, found in Helicobacter hepaticus (strain ATCC 51449 / 3B1).